Here is a 451-residue protein sequence, read N- to C-terminus: Bifunctional protein GlmU (451 aa).

The pyrophosphorylase stretch occupies residues 1–225 (MVVVAILAAG…YQEILGINDR (225 aa)). UDP-N-acetyl-alpha-D-glucosamine contacts are provided by residues 7 to 10 (LAAG), Lys21, Gln72, and 77 to 78 (GT). Asp102 provides a ligand contact to Mg(2+). Positions 139, 154, 169, and 223 each coordinate UDP-N-acetyl-alpha-D-glucosamine. Residue Asn223 participates in Mg(2+) binding. The interval 226 to 246 (LQLATAYEILQRRVKEQWMMA) is linker. The N-acetyltransferase stretch occupies residues 247 to 451 (GVTLIDPNSI…PGWRKKSGES (205 aa)). Residues Arg328 and Lys346 each coordinate UDP-N-acetyl-alpha-D-glucosamine. The active-site Proton acceptor is the His358. Positions 361 and 372 each coordinate UDP-N-acetyl-alpha-D-glucosamine. Acetyl-CoA contacts are provided by residues Ala375, 381-382 (NY), Ser400, Ala418, and Arg435.

It in the N-terminal section; belongs to the N-acetylglucosamine-1-phosphate uridyltransferase family. This sequence in the C-terminal section; belongs to the transferase hexapeptide repeat family. As to quaternary structure, homotrimer. Requires Mg(2+) as cofactor.

The protein resides in the cytoplasm. It carries out the reaction alpha-D-glucosamine 1-phosphate + acetyl-CoA = N-acetyl-alpha-D-glucosamine 1-phosphate + CoA + H(+). The catalysed reaction is N-acetyl-alpha-D-glucosamine 1-phosphate + UTP + H(+) = UDP-N-acetyl-alpha-D-glucosamine + diphosphate. The protein operates within nucleotide-sugar biosynthesis; UDP-N-acetyl-alpha-D-glucosamine biosynthesis; N-acetyl-alpha-D-glucosamine 1-phosphate from alpha-D-glucosamine 6-phosphate (route II): step 2/2. Its pathway is nucleotide-sugar biosynthesis; UDP-N-acetyl-alpha-D-glucosamine biosynthesis; UDP-N-acetyl-alpha-D-glucosamine from N-acetyl-alpha-D-glucosamine 1-phosphate: step 1/1. It functions in the pathway bacterial outer membrane biogenesis; LPS lipid A biosynthesis. In terms of biological role, catalyzes the last two sequential reactions in the de novo biosynthetic pathway for UDP-N-acetylglucosamine (UDP-GlcNAc). The C-terminal domain catalyzes the transfer of acetyl group from acetyl coenzyme A to glucosamine-1-phosphate (GlcN-1-P) to produce N-acetylglucosamine-1-phosphate (GlcNAc-1-P), which is converted into UDP-GlcNAc by the transfer of uridine 5-monophosphate (from uridine 5-triphosphate), a reaction catalyzed by the N-terminal domain. This chain is Bifunctional protein GlmU, found in Trichormus variabilis (strain ATCC 29413 / PCC 7937) (Anabaena variabilis).